The following is a 174-amino-acid chain: Repair DNA polymerase X (174 aa).

The tract at residues 42 to 51 (REEKMLNDVD) is involved in ssDNA binding. Mg(2+) contacts are provided by D49 and D51. A disulfide bond links C81 and C86. Position 100 (D100) interacts with Mg(2+).

Belongs to the DNA polymerase type-X family. It depends on Mg(2+) as a cofactor.

It localises to the virion. The enzyme catalyses DNA(n) + a 2'-deoxyribonucleoside 5'-triphosphate = DNA(n+1) + diphosphate. Functionally, error-prone polymerase lacking a proofreading 3'-5' exonuclease which catalyzes the gap-filling reaction during the DNA repair process. Specifically binds intermediates in the single-nucleotide base-excision repair process. Also catalyzes DNA polymerization with low nucleotide-insertion fidelity. Probably acts as a strategic DNA mutase, which gives rise to a rapid emergence of variants. Generates mismatched G-G pairs, in that case, the polymerase first binds the deoxynucleotide followed by mismatch formation. Together with the viral DNA ligase, fills the single nucleotide gaps generated by the AP endonuclease. Binds DNA with high affinity via the helix alphaE. This chain is Repair DNA polymerase X, found in African swine fever virus (isolate Tick/South Africa/Pretoriuskop Pr4/1996) (ASFV).